The primary structure comprises 545 residues: Glutamine-dependent NAD(+) synthetase (545 aa).

The region spanning leucine 5–arginine 247 is the CN hydrolase domain. Catalysis depends on glutamate 46, which acts as the Proton acceptor; for glutaminase activity. Lysine 113 acts as the For glutaminase activity in catalysis. Tyrosine 119 serves as a coordination point for L-glutamine. Catalysis depends on cysteine 151, which acts as the Nucleophile; for glutaminase activity. 2 residues coordinate L-glutamine: serine 177 and lysine 183. Residues valine 269–glycine 545 are ligase. Glycine 292–serine 299 is an ATP binding site. Deamido-NAD(+) is bound at residue asparagine 375. Threonine 399 is a binding site for ATP. Deamido-NAD(+)-binding residues include glutamate 404 and lysine 516.

The protein in the C-terminal section; belongs to the NAD synthetase family.

It carries out the reaction deamido-NAD(+) + L-glutamine + ATP + H2O = L-glutamate + AMP + diphosphate + NAD(+) + H(+). It functions in the pathway cofactor biosynthesis; NAD(+) biosynthesis; NAD(+) from deamido-NAD(+) (L-Gln route): step 1/1. Its function is as follows. Catalyzes the ATP-dependent amidation of deamido-NAD to form NAD. Uses L-glutamine as a nitrogen source. This Xylella fastidiosa (strain Temecula1 / ATCC 700964) protein is Glutamine-dependent NAD(+) synthetase.